The following is a 401-amino-acid chain: All trans-polyprenyl-diphosphate synthase PDSS2 (401 aa).

Belongs to the FPP/GGPP synthase family. As to quaternary structure, heterotetramer composed of 2 PDSS1/DPS1 and 2 PDSS2/DLP1 subunits.

It is found in the mitochondrion. The catalysed reaction is 7 isopentenyl diphosphate + (2E,6E)-farnesyl diphosphate = all-trans-decaprenyl diphosphate + 7 diphosphate. It catalyses the reaction 6 isopentenyl diphosphate + (2E,6E)-farnesyl diphosphate = all-trans-nonaprenyl diphosphate + 6 diphosphate. The protein operates within cofactor biosynthesis; ubiquinone biosynthesis. Its function is as follows. Heterotetrameric enzyme that catalyzes the condensation of farnesyl diphosphate (FPP), which acts as a primer, and isopentenyl diphosphate (IPP) to produce prenyl diphosphates of varying chain lengths and participates in the determination of the side chain of ubiquinone. Supplies nona and decaprenyl diphosphate, the precursors for the side chain of the isoprenoid quinones ubiquinone-9 (Q9) and ubiquinone-10 (Q10) respectively. The enzyme adds isopentenyl diphosphate molecules sequentially to farnesyl diphosphate with trans stereochemistry. May play a role during cerebellar development. May regulate mitochondrial respiratory chain function. The chain is All trans-polyprenyl-diphosphate synthase PDSS2 from Mus musculus (Mouse).